A 633-amino-acid chain; its full sequence is Heterogeneous nuclear ribonucleoprotein R (633 aa).

The disordered stretch occupies residues 1 to 24 (MANQVNGNAVQLKEEEEPMDTSSV). Alanine 2 is modified (N-acetylalanine). Glycyl lysine isopeptide (Lys-Gly) (interchain with G-Cter in SUMO2) cross-links involve residues lysine 13 and lysine 171. 3 consecutive RRM domains span residues 165 to 244 (TEVF…ISVA), 246 to 328 (NRLF…WADP), and 341 to 411 (KVLF…LAKP). Lysine 359 is covalently cross-linked (Glycyl lysine isopeptide (Lys-Gly) (interchain with G-Cter in SUMO2)). Lysine 366 carries the post-translational modification N6-acetyllysine. The short motif at 412-418 (PDKKRKE) is the Nuclear localization signal element. Positions 412-456 (PDKKRKERQAARQASRSTAYEDYYYHPPPRMPPPIRGRGRGGGRG) are disordered. The segment covering 437-446 (HPPPRMPPPI) has biased composition (pro residues). An RNA-binding RGG-box region spans residues 447–567 (RGRGRGGGRG…SRGSRGNRGG (121 aa)). One copy of the 1; approximate repeat lies at 462–471 (PDYYGYEDYY). The tract at residues 462–497 (PDYYGYEDYYDDYYGYDYHDYRGGYEDPYYGYDDGY) is 3 X 11 AA approximate repeats of D-D-Y-Y-G-Y-D-Y-H-D-Y. Repeat 2 spans residues 472–482 (DDYYGYDYHDY). One copy of the 3; approximate repeat lies at 488 to 497 (DPYYGYDDGY). Residues 501–510 (GRGGGRGGRG) show a composition bias toward gly residues. The segment at 501–633 (GRGGGRGGRG…YQDTYGQQWK (133 aa)) is disordered. The segment covering 511–524 (APPPPRGRGAPPPR) has biased composition (pro residues). The span at 525–541 (GRAGYSQRGAPLGPPRG) shows a compositional bias: low complexity. Residues 558–570 (SRGSRGNRGGNVG) show a composition bias toward gly residues. Residues 588–604 (TNNQQNWGSQPIAQQPL) show a composition bias toward polar residues. Residues 605-621 (QQGGDYSGNYGYNNDNQ) show a composition bias toward low complexity. Positions 622–633 (EFYQDTYGQQWK) are enriched in polar residues.

As to quaternary structure, identified in the spliceosome C complex. Identified in a IGF2BP1-dependent mRNP granule complex containing untranslated mRNAs. Interacts with GTPBP1.

It is found in the nucleus. It localises to the microsome. The protein resides in the nucleoplasm. The protein localises to the cytoplasm. Component of ribonucleosomes, which are complexes of at least 20 other different heterogeneous nuclear ribonucleoproteins (hnRNP). hnRNP play an important role in processing of precursor mRNA in the nucleus. The sequence is that of Heterogeneous nuclear ribonucleoprotein R (HNRNPR) from Homo sapiens (Human).